Here is a 329-residue protein sequence, read N- to C-terminus: tRNA N6-adenosine threonylcarbamoyltransferase (329 aa).

Fe cation-binding residues include histidine 107 and histidine 111. Substrate is bound by residues 129–133 (LVSGG), aspartate 162, glycine 175, and asparagine 268. Position 296 (aspartate 296) interacts with Fe cation.

It belongs to the KAE1 / TsaD family. Fe(2+) serves as cofactor.

The protein resides in the cytoplasm. It catalyses the reaction L-threonylcarbamoyladenylate + adenosine(37) in tRNA = N(6)-L-threonylcarbamoyladenosine(37) in tRNA + AMP + H(+). Required for the formation of a threonylcarbamoyl group on adenosine at position 37 (t(6)A37) in tRNAs that read codons beginning with adenine. Is involved in the transfer of the threonylcarbamoyl moiety of threonylcarbamoyl-AMP (TC-AMP) to the N6 group of A37, together with TsaE and TsaB. TsaD likely plays a direct catalytic role in this reaction. This is tRNA N6-adenosine threonylcarbamoyltransferase from Nitratiruptor sp. (strain SB155-2).